Reading from the N-terminus, the 376-residue chain is Chaperone protein DnaJ (376 aa).

The 68-residue stretch at 5–72 (DFYEVLGVPK…QKRAAYDQYG (68 aa)) folds into the J domain. A CR-type zinc finger spans residues 136 to 214 (GKEAQIRIPS…CHGQGRVKKQ (79 aa)). 8 residues coordinate Zn(2+): Cys149, Cys152, Cys166, Cys169, Cys188, Cys191, Cys202, and Cys205. CXXCXGXG motif repeat units follow at residues 149–156 (CETCHGSG), 166–173 (CGTCQGSG), 188–195 (CPHCRGTG), and 202–209 (CTACHGQG). 2 disordered regions span residues 227 to 246 (DGMR…GGPP) and 352 to 376 (SLKK…SFFS). Residues 237 to 246 (GEPGTNGGPP) show a composition bias toward gly residues. The segment covering 367 to 376 (WTDRLKSFFS) has biased composition (basic and acidic residues).

Belongs to the DnaJ family. In terms of assembly, homodimer. The cofactor is Zn(2+).

Its subcellular location is the cytoplasm. Participates actively in the response to hyperosmotic and heat shock by preventing the aggregation of stress-denatured proteins and by disaggregating proteins, also in an autonomous, DnaK-independent fashion. Unfolded proteins bind initially to DnaJ; upon interaction with the DnaJ-bound protein, DnaK hydrolyzes its bound ATP, resulting in the formation of a stable complex. GrpE releases ADP from DnaK; ATP binding to DnaK triggers the release of the substrate protein, thus completing the reaction cycle. Several rounds of ATP-dependent interactions between DnaJ, DnaK and GrpE are required for fully efficient folding. Also involved, together with DnaK and GrpE, in the DNA replication of plasmids through activation of initiation proteins. This chain is Chaperone protein DnaJ, found in Acidovorax sp. (strain JS42).